A 243-amino-acid polypeptide reads, in one-letter code: Urease accessory protein UreF (243 aa).

This sequence belongs to the UreF family. UreD, UreF and UreG form a complex that acts as a GTP-hydrolysis-dependent molecular chaperone, activating the urease apoprotein by helping to assemble the nickel containing metallocenter of UreC. The UreE protein probably delivers the nickel.

It localises to the cytoplasm. Its function is as follows. Required for maturation of urease via the functional incorporation of the urease nickel metallocenter. The protein is Urease accessory protein UreF of Rhodopseudomonas palustris (strain BisB5).